We begin with the raw amino-acid sequence, 118 residues long: UPF0342 protein BT9727_0768 (118 aa).

The protein belongs to the UPF0342 family.

This chain is UPF0342 protein BT9727_0768, found in Bacillus thuringiensis subsp. konkukian (strain 97-27).